A 101-amino-acid polypeptide reads, in one-letter code: MNNNVEELLRRIPLYNKYGKDFPQETVTRFQMPEFKLPALQPTRDLLCPWYEECDNITKVCQLHDSSNKKFDQWYKEQYLSKKPPGIVGNTLLSPSRKDNS.

Residue Met1 is modified to N-acetylmethionine. Ser94 is modified (phosphoserine).

Component of the ESCRT-I complex (endosomal sorting complex required for transport I) which consists of STP22, VPS28, SRN2 and MVB12 in a 1:1:1:1 stoichiometry. Interacts with STP22 and SRN2.

It is found in the cytoplasm. The protein resides in the endosome. Its subcellular location is the late endosome membrane. Functionally, component of the ESCRT-I complex, a regulator of vesicular trafficking process. Binds to ubiquitinated cargo proteins and is required for the sorting of endocytic ubiquitinated cargos into multivesicular bodies (MVBs). Appears to be involved in cargo sorting and release of the ESCRT-I complex from the MVBs. This is Multivesicular body sorting factor 12 (MVB12) from Saccharomyces cerevisiae (strain ATCC 204508 / S288c) (Baker's yeast).